The primary structure comprises 587 residues: Tripartite motif-containing protein 29 (587 aa).

The segment at Met1–Ser71 is disordered. A phosphoserine mark is found at Ser21, Ser28, Ser58, and Ser104. Tyr106 carries the post-translational modification Phosphotyrosine. The segment at Phe220–Val260 adopts a B box-type zinc-finger fold. Cys225, His228, Cys247, and His252 together coordinate Zn(2+). The stretch at Thr259–Asp348 forms a coiled coil. Thr476 carries the post-translational modification Phosphothreonine. Ser489 is subject to Phosphoserine.

As to quaternary structure, interacts with VIM and HINT1. Interacts with IKBKG/NEMO. Interacts with STING1.

The protein localises to the cytoplasm. It is found in the lysosome. Its function is as follows. Plays a crucial role in the regulation of macrophage activation in response to viral or bacterial infections within the respiratory tract. Mechanistically, TRIM29 interacts with IKBKG/NEMO in the lysosome where it induces its 'Lys-48' ubiquitination and subsequent degradation. In turn, the expression of type I interferons and the production of pro-inflammatory cytokines are inhibited. Additionally, induces the 'Lys-48' ubiquitination of STING1 in a similar way, leading to its degradation. The polypeptide is Tripartite motif-containing protein 29 (Trim29) (Mus musculus (Mouse)).